The chain runs to 397 residues: MSLRVTRNMLANAENNVKTTLAGKRVVATKPGLRPRTALGDIGNKAEVKVPTKKELKPAVKAAKKAKPVDKLLEPLKVIEENVCPKPAQVEPSSPSPMETSGCLPDELCQAFSDVLIHVKDVDADDDGNPMLCSEYVKDIYAYLRSLEDAQAVRQNYLHGQEVTGNMRAILIDWLVQVQMKFRLLQETMFMTVGIIDRFLQEHPVPKNQLQLVGVTAMFLAAKYEEMYPPEIGDFTFVTDHTYTKAQIRDMEMKILRVLKFAIGRPLPLHFLRRASKIGEVTAEQHSLAKYLMELVMVDYDMVHFTPSQIAAASSCLSLKILNAGDWTPTLHHYMAYSEEDLVPVMQHMAKNIIKVNKGLTKHLTVKNKYASSKQMKISTIPQLRSDVVVEMARPLM.

The protein belongs to the cyclin family. Cyclin AB subfamily. In terms of assembly, interacts with the cdc2 protein kinase to form a serine/threonine kinase holoenzyme complex also known as maturation promoting factor (MPF). The cyclin subunit imparts substrate specificity to the complex. When not in a complex with cdc2, interacts with spdya. Interacts with nap1l1. Interacts with nanos1.

It is found in the cytoplasm. Its subcellular location is the cytoskeleton. The protein resides in the microtubule organizing center. It localises to the centrosome. The protein localises to the nucleus. In terms of biological role, essential for the control of the cell cycle at the G2/M (mitosis) transition. This Xenopus laevis (African clawed frog) protein is G2/mitotic-specific cyclin-B1 (ccnb1).